The following is a 121-amino-acid chain: uncharacterized protein (121 aa).

The tract at residues 85 to 111 (NANNDDYESPYKTPKIKSNPSLDSSGS) is disordered. Positions 100–111 (IKSNPSLDSSGS) are enriched in polar residues.

This is an uncharacterized protein from Dictyostelium discoideum (Social amoeba).